Reading from the N-terminus, the 120-residue chain is NAD(P)H-quinone oxidoreductase subunit 3, chloroplastic (120 aa).

A run of 3 helical transmembrane segments spans residues 9–29 (IFWA…LISG), 64–84 (MFAL…PWAM), and 88–108 (VLGV…IVGS).

This sequence belongs to the complex I subunit 3 family. As to quaternary structure, NDH is composed of at least 16 different subunits, 5 of which are encoded in the nucleus.

The protein localises to the plastid. It is found in the chloroplast thylakoid membrane. It catalyses the reaction a plastoquinone + NADH + (n+1) H(+)(in) = a plastoquinol + NAD(+) + n H(+)(out). The catalysed reaction is a plastoquinone + NADPH + (n+1) H(+)(in) = a plastoquinol + NADP(+) + n H(+)(out). In terms of biological role, NDH shuttles electrons from NAD(P)H:plastoquinone, via FMN and iron-sulfur (Fe-S) centers, to quinones in the photosynthetic chain and possibly in a chloroplast respiratory chain. The immediate electron acceptor for the enzyme in this species is believed to be plastoquinone. Couples the redox reaction to proton translocation, and thus conserves the redox energy in a proton gradient. The chain is NAD(P)H-quinone oxidoreductase subunit 3, chloroplastic from Buxus microphylla (Littleleaf boxwood).